Reading from the N-terminus, the 897-residue chain is Isoleucine--tRNA ligase (897 aa).

Residues 59–69 (PYANGDIHVGH) carry the 'HIGH' region motif. Residue E552 coordinates L-isoleucyl-5'-AMP. The short motif at 593–597 (KMSKS) is the 'KMSKS' region element. Position 596 (K596) interacts with ATP. Zn(2+)-binding residues include C872, C875, C890, and C893.

The protein belongs to the class-I aminoacyl-tRNA synthetase family. IleS type 1 subfamily. As to quaternary structure, monomer. It depends on Zn(2+) as a cofactor.

The protein resides in the cytoplasm. The catalysed reaction is tRNA(Ile) + L-isoleucine + ATP = L-isoleucyl-tRNA(Ile) + AMP + diphosphate. In terms of biological role, catalyzes the attachment of isoleucine to tRNA(Ile). As IleRS can inadvertently accommodate and process structurally similar amino acids such as valine, to avoid such errors it has two additional distinct tRNA(Ile)-dependent editing activities. One activity is designated as 'pretransfer' editing and involves the hydrolysis of activated Val-AMP. The other activity is designated 'posttransfer' editing and involves deacylation of mischarged Val-tRNA(Ile). This is Isoleucine--tRNA ligase from Mycoplasmoides gallisepticum (strain R(low / passage 15 / clone 2)) (Mycoplasma gallisepticum).